A 61-amino-acid polypeptide reads, in one-letter code: Bacteriocin leucocin-B (61 aa).

Positions 1-24 (MNNMKSADNYQQLDNNALEQVVGG) are excised as a propeptide. A disulfide bridge links C33 with C38.

The protein belongs to the bacteriocin class IIA/YGNGV family.

The protein localises to the secreted. Active against L.monocytogenes and several lactic acid bacteria. This chain is Bacteriocin leucocin-B, found in Leuconostoc carnosum.